Consider the following 212-residue polypeptide: Thymidylate kinase (212 aa).

ATP is bound at residue 13 to 20 (GLEGAGKS).

Belongs to the thymidylate kinase family.

The enzyme catalyses dTMP + ATP = dTDP + ADP. Its function is as follows. Phosphorylation of dTMP to form dTDP in both de novo and salvage pathways of dTTP synthesis. This is Thymidylate kinase from Legionella pneumophila (strain Paris).